We begin with the raw amino-acid sequence, 398 residues long: 2,3,4,5-tetrahydropyridine-2,6-dicarboxylate N-succinyltransferase (398 aa).

Catalysis depends on glutamate 268, which acts as the Acyl-anhydride intermediate. Succinyl-CoA-binding positions include arginine 270, glycine 285, serine 288, alanine 311, 326 to 327, glycine 334, lysine 361, and 374 to 377; these read DG and RQNS.

The protein belongs to the type 2 tetrahydrodipicolinate N-succinyltransferase family. In terms of assembly, homotrimer.

Its subcellular location is the cytoplasm. It carries out the reaction (S)-2,3,4,5-tetrahydrodipicolinate + succinyl-CoA + H2O = (S)-2-succinylamino-6-oxoheptanedioate + CoA. It participates in amino-acid biosynthesis; L-lysine biosynthesis via DAP pathway; LL-2,6-diaminopimelate from (S)-tetrahydrodipicolinate (succinylase route): step 1/3. Its function is as follows. Catalyzes the conversion of the cyclic tetrahydrodipicolinate (THDP) into the acyclic N-succinyl-L-2-amino-6-oxopimelate using succinyl-CoA. In Sulfurimonas denitrificans (strain ATCC 33889 / DSM 1251) (Thiomicrospira denitrificans (strain ATCC 33889 / DSM 1251)), this protein is 2,3,4,5-tetrahydropyridine-2,6-dicarboxylate N-succinyltransferase.